The sequence spans 952 residues: Respiratory burst oxidase homolog protein E (952 aa).

Topologically, residues 1–392 are cytoplasmic; it reads MKLSPLSFST…QCLILDNWQR (392 aa). EF-hand-like regions lie at residues 211–219 and 245–256; these read SKNGLLARD and RRQKLEKITKDE. EF-hand domains follow at residues 268–303 and 312–347; these read SFDARLQIFFDMADSNEDGKITREEIKELLMLSASA and QAEEYASLIMEELDPENFGYIELWQLETLLLQRDAY. Asp281, Asn283, Asp285, Lys287, and Glu292 together coordinate Ca(2+). Residues 393 to 413 traverse the membrane as a helical segment; it reads SWVLLVWVMLMAILFVWKFLE. The Extracellular segment spans residues 414–475; that stretch reads YREKAAFKVM…PFDDNINFHK (62 aa). The 157-residue stretch at 431–587 folds into the Ferric oxidoreductase domain; it reads KGAAETLKLN…LLVVVYIMLI (157 aa). A helical membrane pass occupies residues 476–496; the sequence is IIACAIAIGILVHAGTHLACD. At 497–531 the chain is on the cytoplasmic side; it reads FPRIINSSPEQFVLIASAFNGTKPTFKDLMTGAEG. The chain crosses the membrane as a helical span at residues 532-552; the sequence is ITGISMVILTTIAFTLASTHF. Residues 553–574 are Extracellular-facing; sequence RRNRVRLPAPLDRLTGFNAFWY. A helical membrane pass occupies residues 575–595; it reads THHLLVVVYIMLIVHGTFLFF. At 596 to 603 the chain is on the cytoplasmic side; sequence ADKWYQKT. Residues 604–621 form a helical membrane-spanning segment; that stretch reads TWMYISVPLVLYVAERSL. Residues 622-750 are Extracellular-facing; that stretch reads RACRSKHYSV…PYGAPAQDYR (129 aa). Residues 626–748 enclose the FAD-binding FR-type domain; sequence SKHYSVKILK…DGPYGAPAQD (123 aa). A helical membrane pass occupies residues 751-771; the sequence is SYDVLLLIGLGIGATPFISIL. Topologically, residues 772–952 are cytoplasmic; the sequence is KDLLNNSRDE…TRFEFHKEHF (181 aa).

This sequence belongs to the RBOH (TC 5.B.1.3) family. As to quaternary structure, monomer and homodimer. In terms of tissue distribution, expressed in roots, inflorescences, leaves and stems.

Its subcellular location is the membrane. Its function is as follows. Calcium-dependent NADPH oxidase that generates superoxide. This chain is Respiratory burst oxidase homolog protein E (RBOHE), found in Arabidopsis thaliana (Mouse-ear cress).